The following is a 131-amino-acid chain: Profilin-4 (131 aa).

Cysteine 13 and cysteine 115 are disulfide-bonded. Residues 81 to 97 (AVIRGKKGAGGITVKKT) carry the Involved in PIP2 interaction motif. Threonine 111 bears the Phosphothreonine mark.

It belongs to the profilin family. As to quaternary structure, occurs in many kinds of cells as a complex with monomeric actin in a 1:1 ratio. Post-translationally, phosphorylated by MAP kinases.

It is found in the cytoplasm. Its subcellular location is the cytoskeleton. Functionally, binds to actin and affects the structure of the cytoskeleton. At high concentrations, profilin prevents the polymerization of actin, whereas it enhances it at low concentrations. This is Profilin-4 from Olea europaea (Common olive).